Consider the following 179-residue polypeptide: Peptide deformylase (179 aa).

The Fe cation site is built by cysteine 103 and histidine 145. Residue glutamate 146 is part of the active site. Histidine 149 provides a ligand contact to Fe cation.

The protein belongs to the polypeptide deformylase family. Fe(2+) serves as cofactor.

The enzyme catalyses N-terminal N-formyl-L-methionyl-[peptide] + H2O = N-terminal L-methionyl-[peptide] + formate. Its function is as follows. Removes the formyl group from the N-terminal Met of newly synthesized proteins. Requires at least a dipeptide for an efficient rate of reaction. N-terminal L-methionine is a prerequisite for activity but the enzyme has broad specificity at other positions. The protein is Peptide deformylase of Leptospira biflexa serovar Patoc (strain Patoc 1 / Ames).